The chain runs to 128 residues: Cholecystokinin B (128 aa).

The first 20 residues, 1–20 (MCSGVCICLLLAMLSASSKA), serve as a signal peptide directing secretion. A propeptide spanning residues 21–108 (HQATGSLGED…FDQSHRINDR (88 aa)) is cleaved from the precursor. The disordered stretch occupies residues 47–67 (YARASSAGQKKSFQRTDGDQR). Residue Y110 is modified to Sulfotyrosine. Position 116 is a phenylalanine amide (F116). Residues 120–128 (SAEEYEYSS) constitute a propeptide that is removed on maturation.

It belongs to the gastrin/cholecystokinin family. Post-translationally, the precursor is cleaved by proteases to produce a number of active cholecystokinins. As to expression, brain and gastrointestinal tract.

The protein resides in the secreted. The polypeptide is Cholecystokinin B (cck-b) (Xenopus laevis (African clawed frog)).